The following is a 309-amino-acid chain: tRNA dimethylallyltransferase (309 aa).

Position 9–16 (9–16 (GPTAVGKT)) interacts with ATP. 11–16 (TAVGKT) serves as a coordination point for substrate. The segment at 34–37 (DSMQ) is interaction with substrate tRNA.

The protein belongs to the IPP transferase family. Monomer. The cofactor is Mg(2+).

It catalyses the reaction adenosine(37) in tRNA + dimethylallyl diphosphate = N(6)-dimethylallyladenosine(37) in tRNA + diphosphate. Its function is as follows. Catalyzes the transfer of a dimethylallyl group onto the adenine at position 37 in tRNAs that read codons beginning with uridine, leading to the formation of N6-(dimethylallyl)adenosine (i(6)A). This Enterococcus faecalis (strain ATCC 700802 / V583) protein is tRNA dimethylallyltransferase.